The following is an 80-amino-acid chain: Conotoxin Cl9.5 (80 aa).

Residues 1–23 (MNCYLILTVALLLTSAMTGTTTA) form the signal peptide. Positions 24 to 37 (GQLNTKGVTLREDD) are excised as a propeptide. Intrachain disulfides connect C42/C59, C47/C69, and C49/C74.

As to expression, expressed by the venom duct.

It localises to the secreted. The chain is Conotoxin Cl9.5 from Californiconus californicus (California cone).